The following is a 376-amino-acid chain: Carbamoyl phosphate synthase small chain (376 aa).

The CPSase stretch occupies residues 1 to 187; that stretch reads MKALLALEDG…KEDGSFLWKQ (187 aa). 3 residues coordinate L-glutamine: S45, G239, and G241. Residues 189–376 form the Glutamine amidotransferase type-1 domain; sequence KIPLIVYDYG…KEVVLLKLGC (188 aa). The active-site Nucleophile is C266. Positions 267, 270, 308, 310, and 311 each coordinate L-glutamine. Catalysis depends on residues H349 and E351.

It belongs to the CarA family. In terms of assembly, composed of two chains; the small (or glutamine) chain promotes the hydrolysis of glutamine to ammonia, which is used by the large (or ammonia) chain to synthesize carbamoyl phosphate. Tetramer of heterodimers (alpha,beta)4.

It catalyses the reaction hydrogencarbonate + L-glutamine + 2 ATP + H2O = carbamoyl phosphate + L-glutamate + 2 ADP + phosphate + 2 H(+). It carries out the reaction L-glutamine + H2O = L-glutamate + NH4(+). It participates in amino-acid biosynthesis; L-arginine biosynthesis; carbamoyl phosphate from bicarbonate: step 1/1. Its pathway is pyrimidine metabolism; UMP biosynthesis via de novo pathway; (S)-dihydroorotate from bicarbonate: step 1/3. Functionally, small subunit of the glutamine-dependent carbamoyl phosphate synthetase (CPSase). CPSase catalyzes the formation of carbamoyl phosphate from the ammonia moiety of glutamine, carbonate, and phosphate donated by ATP, constituting the first step of 2 biosynthetic pathways, one leading to arginine and/or urea and the other to pyrimidine nucleotides. The small subunit (glutamine amidotransferase) binds and cleaves glutamine to supply the large subunit with the substrate ammonia. In Lawsonia intracellularis (strain PHE/MN1-00), this protein is Carbamoyl phosphate synthase small chain.